Reading from the N-terminus, the 429-residue chain is Serine hydroxymethyltransferase (429 aa).

(6S)-5,6,7,8-tetrahydrofolate is bound by residues leucine 125 and 129–131; that span reads GHL. At lysine 234 the chain carries N6-(pyridoxal phosphate)lysine.

Belongs to the SHMT family. As to quaternary structure, homodimer. It depends on pyridoxal 5'-phosphate as a cofactor.

Its subcellular location is the cytoplasm. It carries out the reaction (6R)-5,10-methylene-5,6,7,8-tetrahydrofolate + glycine + H2O = (6S)-5,6,7,8-tetrahydrofolate + L-serine. Its pathway is one-carbon metabolism; tetrahydrofolate interconversion. The protein operates within amino-acid biosynthesis; glycine biosynthesis; glycine from L-serine: step 1/1. In terms of biological role, catalyzes the reversible interconversion of serine and glycine with tetrahydrofolate (THF) serving as the one-carbon carrier. This reaction serves as the major source of one-carbon groups required for the biosynthesis of purines, thymidylate, methionine, and other important biomolecules. Also exhibits THF-independent aldolase activity toward beta-hydroxyamino acids, producing glycine and aldehydes, via a retro-aldol mechanism. The sequence is that of Serine hydroxymethyltransferase from Allorhizobium ampelinum (strain ATCC BAA-846 / DSM 112012 / S4) (Agrobacterium vitis (strain S4)).